We begin with the raw amino-acid sequence, 477 residues long: Succinate-semialdehyde dehydrogenase [NADP(+)] (477 aa).

NADP(+) is bound by residues 142-143 (WN), 166-169 (KHSE), and 218-219 (GS). Glu240 (proton acceptor) is an active-site residue. Residue Leu241 participates in NADP(+) binding. The Nucleophile role is filled by Cys274. Glu371 provides a ligand contact to NADP(+).

Belongs to the aldehyde dehydrogenase family.

The enzyme catalyses succinate semialdehyde + NADP(+) + H2O = succinate + NADPH + 2 H(+). The protein operates within amino-acid degradation; 4-aminobutanoate degradation. Its function is as follows. Catalyzes the NADP(+) dependent oxidation of succinate semialdehyde to succinate. The polypeptide is Succinate-semialdehyde dehydrogenase [NADP(+)] (ssdA) (Deinococcus radiodurans (strain ATCC 13939 / DSM 20539 / JCM 16871 / CCUG 27074 / LMG 4051 / NBRC 15346 / NCIMB 9279 / VKM B-1422 / R1)).